Reading from the N-terminus, the 423-residue chain is Gamma-glutamyl phosphate reductase (423 aa).

The protein belongs to the gamma-glutamyl phosphate reductase family.

Its subcellular location is the cytoplasm. It carries out the reaction L-glutamate 5-semialdehyde + phosphate + NADP(+) = L-glutamyl 5-phosphate + NADPH + H(+). It participates in amino-acid biosynthesis; L-proline biosynthesis; L-glutamate 5-semialdehyde from L-glutamate: step 2/2. Its function is as follows. Catalyzes the NADPH-dependent reduction of L-glutamate 5-phosphate into L-glutamate 5-semialdehyde and phosphate. The product spontaneously undergoes cyclization to form 1-pyrroline-5-carboxylate. This chain is Gamma-glutamyl phosphate reductase, found in Paramagnetospirillum magneticum (strain ATCC 700264 / AMB-1) (Magnetospirillum magneticum).